The sequence spans 249 residues: 2-C-methyl-D-erythritol 4-phosphate cytidylyltransferase (249 aa).

This sequence belongs to the IspD/TarI cytidylyltransferase family. IspD subfamily.

It catalyses the reaction 2-C-methyl-D-erythritol 4-phosphate + CTP + H(+) = 4-CDP-2-C-methyl-D-erythritol + diphosphate. It functions in the pathway isoprenoid biosynthesis; isopentenyl diphosphate biosynthesis via DXP pathway; isopentenyl diphosphate from 1-deoxy-D-xylulose 5-phosphate: step 2/6. Its function is as follows. Catalyzes the formation of 4-diphosphocytidyl-2-C-methyl-D-erythritol from CTP and 2-C-methyl-D-erythritol 4-phosphate (MEP). The chain is 2-C-methyl-D-erythritol 4-phosphate cytidylyltransferase from Chromohalobacter salexigens (strain ATCC BAA-138 / DSM 3043 / CIP 106854 / NCIMB 13768 / 1H11).